We begin with the raw amino-acid sequence, 866 residues long: DNA mismatch repair protein MutS (866 aa).

An ATP-binding site is contributed by 618-625 (GPNMSGKS).

Belongs to the DNA mismatch repair MutS family.

This protein is involved in the repair of mismatches in DNA. It is possible that it carries out the mismatch recognition step. This protein has a weak ATPase activity. This chain is DNA mismatch repair protein MutS, found in Flavobacterium psychrophilum (strain ATCC 49511 / DSM 21280 / CIP 103535 / JIP02/86).